Consider the following 39-residue polypeptide: Photosystem II reaction center protein J (39 aa).

A helical membrane pass occupies residues 7–27 (IPLWIVAVVAGLGVITVVGLF).

Belongs to the PsbJ family. In terms of assembly, PSII is composed of 1 copy each of membrane proteins PsbA, PsbB, PsbC, PsbD, PsbE, PsbF, PsbH, PsbI, PsbJ, PsbK, PsbL, PsbM, PsbT, PsbX, PsbY, PsbZ, Psb30/Ycf12, peripheral proteins PsbO, CyanoQ (PsbQ), PsbU, PsbV and a large number of cofactors. It forms dimeric complexes.

The protein resides in the cellular thylakoid membrane. In terms of biological role, one of the components of the core complex of photosystem II (PSII). PSII is a light-driven water:plastoquinone oxidoreductase that uses light energy to abstract electrons from H(2)O, generating O(2) and a proton gradient subsequently used for ATP formation. It consists of a core antenna complex that captures photons, and an electron transfer chain that converts photonic excitation into a charge separation. The sequence is that of Photosystem II reaction center protein J from Synechococcus sp. (strain JA-2-3B'a(2-13)) (Cyanobacteria bacterium Yellowstone B-Prime).